The chain runs to 193 residues: Non-canonical purine NTP pyrophosphatase homolog (193 aa).

This sequence belongs to the HAM1 NTPase family.

The sequence is that of Non-canonical purine NTP pyrophosphatase homolog from Halalkalibacterium halodurans (strain ATCC BAA-125 / DSM 18197 / FERM 7344 / JCM 9153 / C-125) (Bacillus halodurans).